We begin with the raw amino-acid sequence, 573 residues long: Urease subunit alpha (573 aa).

A Urease domain is found at 136–573 (GAIDCHVHFI…LPMAQRYFLF (438 aa)). Residues histidine 141, histidine 143, and lysine 224 each contribute to the Ni(2+) site. Lysine 224 is modified (N6-carboxylysine). Histidine 226 is a binding site for substrate. Ni(2+)-binding residues include histidine 253 and histidine 279. Histidine 327 (proton donor) is an active-site residue. Aspartate 367 contacts Ni(2+).

It belongs to the metallo-dependent hydrolases superfamily. Urease alpha subunit family. Heterotrimer of UreA (gamma), UreB (beta) and UreC (alpha) subunits. Three heterotrimers associate to form the active enzyme. Requires Ni cation as cofactor. In terms of processing, carboxylation allows a single lysine to coordinate two nickel ions.

The protein resides in the cytoplasm. The catalysed reaction is urea + 2 H2O + H(+) = hydrogencarbonate + 2 NH4(+). It functions in the pathway nitrogen metabolism; urea degradation; CO(2) and NH(3) from urea (urease route): step 1/1. The sequence is that of Urease subunit alpha from Nocardia farcinica (strain IFM 10152).